The chain runs to 134 residues: Waprin-Phi1 (134 aa).

The N-terminal stretch at 1–23 (MTLRRGSCPLLLFSLVGLLTTCA) is a signal peptide. 2 WAP domains span residues 36–82 (VAEK…SCQI) and 83–133 (PDEK…TTAR). 8 cysteine pairs are disulfide-bonded: C43–C72, C55–C76, C59–C71, C65–C80, C90–C120, C103–C124, C107–C119, and C113–C129.

The protein belongs to the venom waprin family. In terms of tissue distribution, expressed by the venom gland.

It localises to the secreted. Damages membranes of susceptible bacteria. Has no hemolytic activity. Not toxic to mice. Does not inhibit the proteinases elastase and cathepsin G. In Philodryas olfersii (Green snake), this protein is Waprin-Phi1.